The chain runs to 591 residues: Paralemmin-3 (591 aa).

4 repeats span residues 171–174 (EKNK), 183–186 (EKNQ), 224–227 (EKNQ), and 234–237 (KNQD). Residues 282–293 (DQTQSTSDQNME) are compositionally biased toward polar residues. 3 disordered regions span residues 282-317 (DQTQSTSDQNMETKLPTDIPQQKESQSEGKIQTKDQ), 332-413 (KGTT…QNQD), and 515-591 (PDLK…CVVM). 2 stretches are compositionally biased toward basic and acidic residues: residues 306–317 (SQSEGKIQTKDQ) and 349–383 (EPKEENPKAQDEKLDHHNESVSTVHEQKEVHDMDP). Composition is skewed to polar residues over residues 385–413 (QLSTHQKSLSISEDQNQGSVSLSDPQNQD) and 528–542 (QESSSHEPMSSTIAQ). A compositionally biased stretch (low complexity) spans 543-554 (SSSAEGNSSPES). The span at 559 to 575 (QKSQGTDSQQGGNTATQ) shows a compositional bias: polar residues. The Nuclear localization signal motif lies at 579–583 (RRKKK). S-palmitoyl cysteine attachment occurs at residues Cys585 and Cys587. Cys588 carries the post-translational modification Cysteine methyl ester. Cys588 is lipidated: S-farnesyl cysteine. Residues 589–591 (VVM) constitute a propeptide, removed in mature form.

The protein belongs to the paralemmin family. Post-translationally, may be phosphorylated during oocyte maturation. Palmitoylated on Cys-585 and Cys-587 and prenylated on Cys-588; which is required for membrane association. As to expression, in Xenopus oocyte, in the central nervous system cells of tadpoles and adult frogs, and transiently in epithelial cells of stomach and gut of tadpoles. Highly expressed in kidney.

Its subcellular location is the cytoplasm. The protein localises to the nucleus. It localises to the cell membrane. Maternal ATP-binding protein that may have multiple functions during development, one of which may be associated with the development and maintenance of the central nervous system. The sequence is that of Paralemmin-3 (palm3) from Xenopus laevis (African clawed frog).